The primary structure comprises 511 residues: Cytochrome P450 monooxyhenase eriC (511 aa).

A helical membrane pass occupies residues 2 to 22 (VLADFISIPTVSIACLAVLGI). Cys-445 contributes to the heme binding site.

Belongs to the cytochrome P450 family. Requires heme as cofactor.

It localises to the membrane. It carries out the reaction erinacol + reduced [NADPH--hemoprotein reductase] + O2 = cyathadiol + oxidized [NADPH--hemoprotein reductase] + H2O + H(+). Its pathway is secondary metabolite biosynthesis. Its function is as follows. Cytochrome P450 monooxygenase; part of the gene cluster that mediates the biosynthesis of erinacines, cyathane-xylosides that show unique biological activities, including leishmanicidal activity, stimulating activity for nerve growth-factor synthesis, and agonistic activity toward the kappa opioid receptor. Within the pathway, eriC hydroxylates erinacol at C-15 of the seven-membered ring to yield cyathadiol. The first step of the erinacines biosynthesis pathway is catalyzed by the geranylgeranyl diphosphate (GGPP) synthase eriE via conversion of farnesyl pyrophosphate and isopentyl pyrophosphate into geranylgeranyl pyrophosphate (GGPP). GGPP is then substrate of the diterpene cyclase eriG for the production of cyatha-3,12-diene. The cytochrome P450 monooxygenase eriI then hydroxylates cyatha-3,12-diene at C-14 of the seven-membered ring to produce erinacol, which is further hydroxylated at C-15 by the cytochrome P450 monooxygenase eriC to yield cyathadiol. The cytochrome P450 monooxygenase eriA then catalyzes C-11 hydroxylation in the presence of the short chain dehydrogenase/reductase (SDR) eriH, which leads to the production of cyathatriol. The acetyltransferase eriL converts cyathatriol into 11-O-acetyl-cyathatriol. The SDR eriH catalyzes further oxidation of 11-O-acetyl-cyathatriol into 1-O-acetylcyathin A3. Finally, the glycosyl transferase eriJ tranfers xylose from UDP-xylose onto C-14 of 11-O-acetyl-cyathatriol to form eracine Q. EriJ is also able to convert 11-O-acetyl-cyathatriol to eracine Q2 by using UDP-D-glucose as cosubstrate, but at a lower rate. The protein is Cytochrome P450 monooxyhenase eriC of Hericium erinaceus (Lion's mane mushroom).